The sequence spans 358 residues: Dual-specificity RNA methyltransferase RlmN (358 aa).

Glu-91 serves as the catalytic Proton acceptor. Residues 102–337 (GNIRITQCLS…TILRKSKGQD (236 aa)) enclose the Radical SAM core domain. Cys-109 and Cys-342 are joined by a disulfide. [4Fe-4S] cluster contacts are provided by Cys-116, Cys-120, and Cys-123. Residues 169–170 (GE), Ser-201, 223–225 (SLH), and Asn-299 contribute to the S-adenosyl-L-methionine site. Catalysis depends on Cys-342, which acts as the S-methylcysteine intermediate.

The protein belongs to the radical SAM superfamily. RlmN family. The cofactor is [4Fe-4S] cluster.

Its subcellular location is the cytoplasm. It catalyses the reaction adenosine(2503) in 23S rRNA + 2 reduced [2Fe-2S]-[ferredoxin] + 2 S-adenosyl-L-methionine = 2-methyladenosine(2503) in 23S rRNA + 5'-deoxyadenosine + L-methionine + 2 oxidized [2Fe-2S]-[ferredoxin] + S-adenosyl-L-homocysteine. The catalysed reaction is adenosine(37) in tRNA + 2 reduced [2Fe-2S]-[ferredoxin] + 2 S-adenosyl-L-methionine = 2-methyladenosine(37) in tRNA + 5'-deoxyadenosine + L-methionine + 2 oxidized [2Fe-2S]-[ferredoxin] + S-adenosyl-L-homocysteine. Functionally, specifically methylates position 2 of adenine 2503 in 23S rRNA and position 2 of adenine 37 in tRNAs. m2A2503 modification seems to play a crucial role in the proofreading step occurring at the peptidyl transferase center and thus would serve to optimize ribosomal fidelity. This chain is Dual-specificity RNA methyltransferase RlmN, found in Lawsonia intracellularis (strain PHE/MN1-00).